The following is a 1183-amino-acid chain: Putative ATP-dependent RNA helicase PB1A10.06c (1183 aa).

Disordered stretches follow at residues M1–L92 and E165–R315. Basic and acidic residues predominate over residues V60–E81. Low complexity-rich tracts occupy residues E165–T176 and T184–T196. Over residues E224–S251 the composition is skewed to acidic residues. Over residues E252–P270 the composition is skewed to basic and acidic residues. Positions E292–D308 are enriched in acidic residues. The Helicase ATP-binding domain maps to M408–I585. Residue G421–T428 participates in ATP binding. The short motif at D522–H525 is the DEAH box element. Residues A611 to N831 enclose the Helicase C-terminal domain. A compositionally biased stretch (acidic residues) spans E673–D683. Residues E673 to D696 are disordered.

This sequence belongs to the DEAD box helicase family. DEAH subfamily.

The protein resides in the nucleus. The protein localises to the nucleolus. The catalysed reaction is ATP + H2O = ADP + phosphate + H(+). The polypeptide is Putative ATP-dependent RNA helicase PB1A10.06c (Schizosaccharomyces pombe (strain 972 / ATCC 24843) (Fission yeast)).